Consider the following 606-residue polypeptide: Scavenger receptor class A member 3 (606 aa).

At 1–56 (MKVRSAGSDRDVLCVTEEDLAGEDEDMPSFPCTQEGRAGPRCNRCQKNLSLHTSVR) the chain is on the cytoplasmic side. The chain crosses the membrane as a helical; Signal-anchor for type II membrane protein span at residues 57 to 77 (ILYLFLTLLLVAVAVLASLVF). The Extracellular portion of the chain corresponds to 78 to 606 (RKVDSLSEDI…PGPPGNQSPY (529 aa)). N-linked (GlcNAc...) asparagine glycans are attached at residues Asn-115, Asn-182, Asn-224, Asn-257, Asn-313, Asn-337, Asn-365, Asn-400, Asn-430, and Asn-451. Positions 455-606 (IRGVPGPPGP…PGPPGNQSPY (152 aa)) are disordered. Collagen-like domains follow at residues 456–558 (RGVP…PGPS) and 559–601 (GPQG…GPPG). Positions 497–516 (PQGQPGEPGPVGERGPAGPR) are enriched in low complexity. Over residues 526–535 (GSFGTGGPRG) the composition is skewed to gly residues. Composition is skewed to pro residues over residues 548-558 (PEGPPGSPGPS) and 591-606 (PGLPGPPGPPGNQSPY).

It localises to the endoplasmic reticulum membrane. It is found in the golgi apparatus membrane. Functionally, seems to protect cells by scavenging oxidative molecules or harmful products of oxidation. This Mus musculus (Mouse) protein is Scavenger receptor class A member 3 (Scara3).